The primary structure comprises 163 residues: Carbon monoxide dehydrogenase small chain (163 aa).

In terms of domain architecture, 2Fe-2S ferredoxin-type spans 4-80; that stretch reads KIITVNVNGK…GSEVLTVEGL (77 aa). [2Fe-2S] cluster contacts are provided by Cys42, Cys47, Cys50, Cys62, Cys101, Cys104, Cys136, and Cys138.

As to quaternary structure, dimer of heterotrimers. Each heterotrimer consists of a large, a medium and a small subunit. Requires [2Fe-2S] cluster as cofactor.

It carries out the reaction CO + a quinone + H2O = a quinol + CO2. Its function is as follows. Catalyzes the oxidation of carbon monoxide to carbon dioxide. The polypeptide is Carbon monoxide dehydrogenase small chain (cutS) (Hydrogenophaga pseudoflava (Pseudomonas carboxydoflava)).